A 304-amino-acid polypeptide reads, in one-letter code: MKKSLTLLILLLCSLLFSTVLSNLLVEPVQPNTVPAFPVETQAQSCRLDLSNELFGGVNEACGRNLDRSRCCPVLAAWLFAAHARSALQLPAPAPTPESSDPDEPMKPDDSQKCVNTLQSALLTKQIKIPQPNSSCDAILCFCGIRLHQISSLSCPAAFNVSSGFKNATPTAAVKNLEKECRNSSYSGCTRCLGALQKLKVRGGNKKTTTERGTKMMSKDCQLMGLTWLLARNKTAYIPTVSAVLRAIMYSPHPPHLNKCSPDQENMPLAVDSLQFQKSFSSSSHLFGVLPFLPLVLCIFLFLL.

Positions 1–22 are cleaved as a signal peptide; it reads MKKSLTLLILLLCSLLFSTVLS. The segment at 91 to 111 is disordered; that stretch reads PAPAPTPESSDPDEPMKPDDS. Asn-133, Asn-160, Asn-183, and Asn-233 each carry an N-linked (GlcNAc...) asparagine glycan. A lipid anchor (GPI-anchor amidated serine) is attached at Ser-282. Residues 283-304 constitute a propeptide, removed in mature form; sequence SSHLFGVLPFLPLVLCIFLFLL.

The protein localises to the cell membrane. This is an uncharacterized protein from Arabidopsis thaliana (Mouse-ear cress).